Reading from the N-terminus, the 591-residue chain is Pentatricopeptide repeat-containing protein At3g47530 (591 aa).

PPR repeat units lie at residues 76 to 110 (TLSH…SSLP), 112 to 146 (NPLS…GFLS), 147 to 177 (DSLL…IPKR), 178 to 208 (DTVS…MKND), 216 to 250 (DGVT…GLSG), 251 to 281 (ALNL…MRER), 282 to 316 (NVVS…GISP), 317 to 351 (EEQT…EFKI), and 354 to 384 (NLHH…MEMK). Positions 389 to 464 (IWRTLLGACR…KPGCSAIELQ (76 aa)) are type E motif. Residues 465 to 495 (GTVHEFIVDDVSHPRKEEIYKMLAEINQQLK) are type E(+) motif. Positions 496–591 (IAGYVAEITS…GGSCSCNDFW (96 aa)) are type DYW motif.

The protein belongs to the PPR family. PCMP-H subfamily.

The chain is Pentatricopeptide repeat-containing protein At3g47530 (PCMP-H76) from Arabidopsis thaliana (Mouse-ear cress).